Consider the following 84-residue polypeptide: uncharacterized protein (84 aa).

An HTH cro/C1-type domain is found at 7-62; that stretch reads IDVMLAKRKMSVTELSERVGITMANLSILKNGKAKAIRLSTLEAICKALECQPGDI. The segment at residues 18–37 is a DNA-binding region (H-T-H motif); that stretch reads VTELSERVGITMANLSILKN.

This is an uncharacterized protein from Bacillus subtilis (strain 168).